Reading from the N-terminus, the 315-residue chain is O-antigen chain rhamnosyltransferase WbaN (315 aa).

The protein belongs to the glycosyltransferase 2 family.

It catalyses the reaction alpha-D-galactosyl-di-trans,octa-cis-undecaprenyl diphosphate + dTDP-beta-L-rhamnose = alpha-L-rhamnosyl-(1-&gt;3)-alpha-D-galactosyl-1-diphospho-di-trans,octa-cis-undecaprenol + dTDP + H(+). It functions in the pathway bacterial outer membrane biogenesis; LPS O-antigen biosynthesis. Rhamnosyltransferase involved in the biosynthesis of the repeat unit of the lipopolysaccharide (LPS) O-antigen region. Catalyzes the addition of a rhamnose to the galactosyl-undecaprenyl diphosphate intermediate. The sequence is that of O-antigen chain rhamnosyltransferase WbaN from Salmonella anatum.